The sequence spans 223 residues: Cytotoxic T-lymphocyte protein 4 (223 aa).

A signal peptide spans 1-35 (MAGFGFRRHGVQPDLASRTWPCTALFSLLFIPVFS). At 36 to 161 (KGMHAAQPAV…IDPEPCPDSD (126 aa)) the chain is on the extracellular side. One can recognise an Ig-like V-type domain in the interval 39–140 (HAAQPAVVLA…VELMYPPPYY (102 aa)). Positions 46-50 (VLASS) are homodimerization. 2 disulfide bridges follow: cysteine 58-cysteine 129 and cysteine 85-cysteine 103. N-linked (GlcNAc...) asparagine glycosylation is present at asparagine 113. The important for interaction with CD80 and CD86 stretch occupies residues 134-139 (MYPPPY). Asparagine 145 is a glycosylation site (N-linked (GlcNAc...) asparagine). Residues 150–155 (YVIDPE) are homodimerization. A helical transmembrane segment spans residues 162–182 (FLLWILAAVSSGLFFYSFLIT). At 183–223 (AVSLSKMLKKRSPLTTGVYVKMPPTGPECEKQFQPYFIPIN) the chain is on the cytoplasmic side. Tyrosine 201 is subject to Phosphotyrosine; by TXK and JAK2.

In terms of assembly, homodimer; disulfide-linked. Binds to CD80/B7-1 and CD86/B7.2. Interacts with ICOSLG. Post-translationally, N-glycosylation is important for dimerization. In terms of processing, phosphorylation at Tyr-201 prevents binding to the AP-2 adapter complex, blocks endocytosis, and leads to retention of CTLA4 on the cell surface.

Its subcellular location is the cell membrane. In terms of biological role, inhibitory receptor acting as a major negative regulator of T-cell responses. The affinity of CTLA4 for its natural B7 family ligands, CD80 and CD86, is considerably stronger than the affinity of their cognate stimulatory coreceptor CD28. This is Cytotoxic T-lymphocyte protein 4 (CTLA4) from Canis lupus familiaris (Dog).